Consider the following 88-residue polypeptide: MDCFKVFEVVFQSEINPLLLIPAVATIALTLCCYCYHGYQWIRDRRTARIEEQQAQLPLPLSRISITPGCSMVATTKLTHSRNSVDIY.

Residues M1–E14 are Lumenal-facing. Residues I15–H37 form a helical membrane-spanning segment. Residues G38–Y88 are Cytoplasmic-facing.

As to quaternary structure, interacts with 14-3-3zeta. Expressed in hemocytes.

The protein resides in the early endosome membrane. In terms of biological role, negatively regulates early endosome maturation by binding to and repressing the activity of 14-3-3zeta which prevents the 14-3-3zeta-mediated activation of phosphoinositide 3-kinase Pi3K68D. This, in turn, inhibits the Pi3K68D-mediated conversion of phosphatidylinositol to phosphatidylinositol-3-phosphate and prevents progression of early endosomes through the maturation process which regulates subsequent steps of phagocytic processing. In Drosophila melanogaster (Fruit fly), this protein is Hemotin.